A 957-amino-acid polypeptide reads, in one-letter code: Plasma membrane ATPase 1 (957 aa).

At 1-66 (MGEEKPEVLD…EKKDSKLLKF (66 aa)) the chain is on the cytoplasmic side. The helical transmembrane segment at 67 to 86 (LGFMWNPLSWVMEAAAIMAI) threads the bilayer. At 87–98 (ALANGGGKPPDW) the chain is on the extracellular side. Residues 99-119 (QDFVGIITLLIINSTISFIEE) form a helical membrane-spanning segment. At 120–248 (NNAGNAAAAL…GHFQKVLTAI (129 aa)) the chain is on the cytoplasmic side. A helical transmembrane segment spans residues 249-269 (GNFCICSIAVGMIIEIIVMYP). Residues 270 to 279 (IQHRAYRPGI) are Extracellular-facing. A helical membrane pass occupies residues 280–301 (DNLLVLLIGGIPIAMPTVLSVT). The Cytoplasmic portion of the chain corresponds to 302 to 648 (MAIGSHRLAQ…TSRAIFQRMK (347 aa)). D334 acts as the 4-aspartylphosphate intermediate in catalysis. Mg(2+) is bound by residues D593 and D597. Residues 649–670 (NYTIYAVSITIRIVLGFMLLAL) traverse the membrane as a helical segment. Topologically, residues 671–675 (IWKFD) are extracellular. The chain crosses the membrane as a helical span at residues 676–698 (FPPFMVLIIAILNDGTIMTISKD). Residues 699 to 714 (RVKPSPLPDSWKLAEI) are Cytoplasmic-facing. The chain crosses the membrane as a helical span at residues 715 to 735 (FTTGIVLGGYLAMMTVIFFWA). At 736–760 (AYKTNFFPHVFGVSTLEKTATDDFR) the chain is on the extracellular side. The helical transmembrane segment at 761-781 (KLASAIYLQVSIISQALIFVT) threads the bilayer. Residues 782–793 (RSRSWSFVERPG) are Cytoplasmic-facing. Residues 794–814 (FLLVIAFVIAQLVATLIAVYA) form a helical membrane-spanning segment. Topologically, residues 815–823 (NWSFAAIEG) are extracellular. Residues 824 to 844 (IGWGWAGVIWIYNLVFYIPLD) form a helical membrane-spanning segment. The Cytoplasmic portion of the chain corresponds to 845–957 (IIKFFIRYAL…IETIQQAYTV (113 aa)).

Belongs to the cation transport ATPase (P-type) (TC 3.A.3) family. Type IIIA subfamily. Expressed in roots, stems, leaves from both vegetative and flowering plants, and flowers at early and late stages of development with highest expression levels found in flowers and stem.

The protein resides in the cell membrane. It carries out the reaction ATP + H2O + H(+)(in) = ADP + phosphate + 2 H(+)(out). Its function is as follows. The plasma membrane ATPase of plants and fungi is a hydrogen ion pump. The proton gradient it generates drives the active transport of nutrients by H(+)-symport. The resulting external acidification and/or internal alkinization may mediate growth responses. This is Plasma membrane ATPase 1 (PMA1) from Nicotiana plumbaginifolia (Leadwort-leaved tobacco).